Consider the following 102-residue polypeptide: Protamine-2 (102 aa).

Positions 1 to 102 (MVRCRVRSPS…RTRRRTCRRH (102 aa)) are disordered. 3 positions are modified to phosphoserine: serine 8, serine 10, and serine 37. Residues 8–17 (SPSERSHEVY) are compositionally biased toward basic and acidic residues. Over residues 39-48 (EHVEVYERTH) the composition is skewed to basic and acidic residues. Residues 49–102 (GHSHYRRRHCSRRRLRRIHRQQHRSCRRRKRRSCRHRRRHRKGCRTRRRTCRRH) are compositionally biased toward basic residues.

This sequence belongs to the protamine P2 family. As to quaternary structure, interacts with TDRP. Post-translationally, proteolytic processing into mature chains is required for histone eviction during spermatogenesis. Transition proteins (TNP1 and TNP2) are required for processing. As to expression, testis.

It is found in the nucleus. Its subcellular location is the chromosome. Its function is as follows. Protamines substitute for histones in the chromatin of sperm during the haploid phase of spermatogenesis. They compact sperm DNA into a highly condensed, stable and inactive complex. This Gorilla gorilla gorilla (Western lowland gorilla) protein is Protamine-2 (PRM2).